Here is a 695-residue protein sequence, read N- to C-terminus: Ubiquitin carboxyl-terminal hydrolase 20 (695 aa).

Disordered regions lie at residues 1-20 (MLMA…SSIL) and 42-162 (SLAL…SLFY). Low complexity-rich tracts occupy residues 9–20 (PSSILPRSSSIL) and 61–86 (NHDS…SQSV). Acidic residues predominate over residues 112–124 (DDIDDDIWGDDDL). In terms of domain architecture, USP spans 176–476 (AGLWNLGNSC…DSYILFYARE (301 aa)). The active-site Nucleophile is Cys-185. His-435 (proton acceptor) is an active-site residue. Residues 556–571 (SAESSSGEESPMGELL) are compositionally biased toward low complexity. 2 disordered regions span residues 556–585 (SAES…PCTE) and 674–695 (AREL…LKTT).

This sequence belongs to the peptidase C19 family.

It carries out the reaction Thiol-dependent hydrolysis of ester, thioester, amide, peptide and isopeptide bonds formed by the C-terminal Gly of ubiquitin (a 76-residue protein attached to proteins as an intracellular targeting signal).. Recognizes and hydrolyzes the peptide bond at the C-terminal Gly of ubiquitin. Involved in the processing of poly-ubiquitin precursors as well as that of ubiquitinated proteins. This Arabidopsis thaliana (Mouse-ear cress) protein is Ubiquitin carboxyl-terminal hydrolase 20 (UBP20).